Reading from the N-terminus, the 419-residue chain is Histidine--tRNA ligase (419 aa).

The protein belongs to the class-II aminoacyl-tRNA synthetase family. Homodimer.

It is found in the cytoplasm. It catalyses the reaction tRNA(His) + L-histidine + ATP = L-histidyl-tRNA(His) + AMP + diphosphate + H(+). The polypeptide is Histidine--tRNA ligase (Thermosipho melanesiensis (strain DSM 12029 / CIP 104789 / BI429)).